The following is a 424-amino-acid chain: Glutamyl-tRNA reductase (424 aa).

Residues 49-52, serine 107, 112-114, and glutamine 118 contribute to the substrate site; these read TCNR and EPQ. Cysteine 50 serves as the catalytic Nucleophile. An NADP(+)-binding site is contributed by 187 to 192; it reads GAGETI.

It belongs to the glutamyl-tRNA reductase family. As to quaternary structure, homodimer.

It carries out the reaction (S)-4-amino-5-oxopentanoate + tRNA(Glu) + NADP(+) = L-glutamyl-tRNA(Glu) + NADPH + H(+). The protein operates within porphyrin-containing compound metabolism; protoporphyrin-IX biosynthesis; 5-aminolevulinate from L-glutamyl-tRNA(Glu): step 1/2. Catalyzes the NADPH-dependent reduction of glutamyl-tRNA(Glu) to glutamate 1-semialdehyde (GSA). This chain is Glutamyl-tRNA reductase, found in Pseudomonas fluorescens (strain ATCC BAA-477 / NRRL B-23932 / Pf-5).